A 210-amino-acid polypeptide reads, in one-letter code: Proteasome subunit beta (210 aa).

A propeptide spans M1–G9 (removed in mature form; by autocatalysis). The Nucleophile role is filled by T10.

The protein belongs to the peptidase T1B family. The 20S proteasome core is composed of 14 alpha and 14 beta subunits that assemble into four stacked heptameric rings, resulting in a barrel-shaped structure. The two inner rings, each composed of seven catalytic beta subunits, are sandwiched by two outer rings, each composed of seven alpha subunits. The catalytic chamber with the active sites is on the inside of the barrel. Has a gated structure, the ends of the cylinder being occluded by the N-termini of the alpha-subunits. Is capped at one or both ends by the proteasome regulatory ATPase, PAN.

The protein resides in the cytoplasm. The catalysed reaction is Cleavage of peptide bonds with very broad specificity.. With respect to regulation, the formation of the proteasomal ATPase PAN-20S proteasome complex, via the docking of the C-termini of PAN into the intersubunit pockets in the alpha-rings, triggers opening of the gate for substrate entry. Interconversion between the open-gate and close-gate conformations leads to a dynamic regulation of the 20S proteasome proteolysis activity. Functionally, component of the proteasome core, a large protease complex with broad specificity involved in protein degradation. This is Proteasome subunit beta from Methanohalophilus mahii (strain ATCC 35705 / DSM 5219 / SLP).